The following is a 191-amino-acid chain: dCTP deaminase, dUMP-forming (191 aa).

DCTP contacts are provided by residues 101-106, Asp-119, 127-129, Gln-148, Tyr-162, and Gln-174; these read KSSLGR and TLE. Catalysis depends on Glu-129, which acts as the Proton donor/acceptor.

It belongs to the dCTP deaminase family. As to quaternary structure, homotrimer.

The enzyme catalyses dCTP + 2 H2O = dUMP + NH4(+) + diphosphate. It functions in the pathway pyrimidine metabolism; dUMP biosynthesis; dUMP from dCTP: step 1/1. Bifunctional enzyme that catalyzes both the deamination of dCTP to dUTP and the hydrolysis of dUTP to dUMP without releasing the toxic dUTP intermediate. The polypeptide is dCTP deaminase, dUMP-forming (Streptomyces coelicolor (strain ATCC BAA-471 / A3(2) / M145)).